A 336-amino-acid polypeptide reads, in one-letter code: Glyceraldehyde-3-phosphate dehydrogenase (336 aa).

NAD(+) is bound by residues 12 to 13 (RI), aspartate 34, arginine 78, and threonine 121. D-glyceraldehyde 3-phosphate-binding positions include 151-153 (SCT), threonine 182, arginine 199, 212-213 (TG), and arginine 235. Cysteine 152 acts as the Nucleophile in catalysis. Position 316 (asparagine 316) interacts with NAD(+).

This sequence belongs to the glyceraldehyde-3-phosphate dehydrogenase family. In terms of assembly, homotetramer.

Its subcellular location is the cytoplasm. It catalyses the reaction D-glyceraldehyde 3-phosphate + phosphate + NAD(+) = (2R)-3-phospho-glyceroyl phosphate + NADH + H(+). The protein operates within carbohydrate degradation; glycolysis; pyruvate from D-glyceraldehyde 3-phosphate: step 1/5. In terms of biological role, also binds human plasminogen. Catalyzes the oxidative phosphorylation of glyceraldehyde 3-phosphate (G3P) to 1,3-bisphosphoglycerate (BPG) using the cofactor NAD. The first reaction step involves the formation of a hemiacetal intermediate between G3P and a cysteine residue, and this hemiacetal intermediate is then oxidized to a thioester, with concomitant reduction of NAD to NADH. The reduced NADH is then exchanged with the second NAD, and the thioester is attacked by a nucleophilic inorganic phosphate to produce BPG. This Streptococcus pyogenes protein is Glyceraldehyde-3-phosphate dehydrogenase (gap).